Here is a 203-residue protein sequence, read N- to C-terminus: Nucleoside triphosphate pyrophosphatase (203 aa).

The active-site Proton acceptor is D78.

This sequence belongs to the Maf family. It depends on a divalent metal cation as a cofactor.

Its subcellular location is the cytoplasm. The enzyme catalyses a ribonucleoside 5'-triphosphate + H2O = a ribonucleoside 5'-phosphate + diphosphate + H(+). It catalyses the reaction a 2'-deoxyribonucleoside 5'-triphosphate + H2O = a 2'-deoxyribonucleoside 5'-phosphate + diphosphate + H(+). Nucleoside triphosphate pyrophosphatase. May have a dual role in cell division arrest and in preventing the incorporation of modified nucleotides into cellular nucleic acids. The sequence is that of Nucleoside triphosphate pyrophosphatase from Prochlorococcus marinus (strain MIT 9301).